We begin with the raw amino-acid sequence, 308 residues long: Aspartate carbamoyltransferase catalytic subunit (308 aa).

The carbamoyl phosphate site is built by Arg-57 and Thr-58. L-aspartate is bound at residue Lys-86. Residues Arg-107, His-135, and Gln-138 each contribute to the carbamoyl phosphate site. Residues Arg-168 and Arg-229 each contribute to the L-aspartate site. Carbamoyl phosphate-binding residues include Leu-268 and Pro-269.

It belongs to the aspartate/ornithine carbamoyltransferase superfamily. ATCase family. Heterooligomer of catalytic and regulatory chains.

The enzyme catalyses carbamoyl phosphate + L-aspartate = N-carbamoyl-L-aspartate + phosphate + H(+). The protein operates within pyrimidine metabolism; UMP biosynthesis via de novo pathway; (S)-dihydroorotate from bicarbonate: step 2/3. Catalyzes the condensation of carbamoyl phosphate and aspartate to form carbamoyl aspartate and inorganic phosphate, the committed step in the de novo pyrimidine nucleotide biosynthesis pathway. The protein is Aspartate carbamoyltransferase catalytic subunit of Pyrococcus horikoshii (strain ATCC 700860 / DSM 12428 / JCM 9974 / NBRC 100139 / OT-3).